A 135-amino-acid polypeptide reads, in one-letter code: Small ribosomal subunit protein bS16 (135 aa).

Residues 106-135 (TERRQKRLVVKSRRRQAKKEAEGKAAGAEA) form a disordered region. Over residues 109–122 (RQKRLVVKSRRRQA) the composition is skewed to basic residues.

This sequence belongs to the bacterial ribosomal protein bS16 family.

The sequence is that of Small ribosomal subunit protein bS16 from Chlorobium phaeobacteroides (strain DSM 266 / SMG 266 / 2430).